We begin with the raw amino-acid sequence, 145 residues long: 3-hydroxyacyl-[acyl-carrier-protein] dehydratase FabZ (145 aa).

His48 is an active-site residue.

It belongs to the thioester dehydratase family. FabZ subfamily.

Its subcellular location is the cytoplasm. It catalyses the reaction a (3R)-hydroxyacyl-[ACP] = a (2E)-enoyl-[ACP] + H2O. Its function is as follows. Involved in unsaturated fatty acids biosynthesis. Catalyzes the dehydration of short chain beta-hydroxyacyl-ACPs and long chain saturated and unsaturated beta-hydroxyacyl-ACPs. The sequence is that of 3-hydroxyacyl-[acyl-carrier-protein] dehydratase FabZ from Geobacillus sp. (strain WCH70).